The sequence spans 111 residues: Putative ciliary rootlet coiled-coil protein-like 1 protein (111 aa).

The stretch at 21–86 forms a coiled coil; it reads MELELSVTKL…RQAEQEATVA (66 aa).

It belongs to the rootletin family.

The polypeptide is Putative ciliary rootlet coiled-coil protein-like 1 protein (CROCCP2) (Homo sapiens (Human)).